The primary structure comprises 161 residues: Cyclic pyranopterin monophosphate synthase (161 aa).

Substrate-binding positions include 75–77 (LCH) and 113–114 (ME). D128 is a catalytic residue.

The protein belongs to the MoaC family. In terms of assembly, homohexamer; trimer of dimers.

It catalyses the reaction (8S)-3',8-cyclo-7,8-dihydroguanosine 5'-triphosphate = cyclic pyranopterin phosphate + diphosphate. It participates in cofactor biosynthesis; molybdopterin biosynthesis. Its function is as follows. Catalyzes the conversion of (8S)-3',8-cyclo-7,8-dihydroguanosine 5'-triphosphate to cyclic pyranopterin monophosphate (cPMP). The polypeptide is Cyclic pyranopterin monophosphate synthase (Escherichia coli O9:H4 (strain HS)).